Consider the following 441-residue polypeptide: Vacuolar cation/proton exchanger 5 (441 aa).

G2 carries the N-myristoyl glycine lipid modification. The Cytoplasmic segment spans residues 2–69 (GCCKVPALIQ…PNNSVLQSFK (68 aa)). Residues C3 and C4 are each lipidated (S-palmitoyl cysteine). A helical transmembrane segment spans residues 70 to 90 (IVILSNKLNLLLPFGPLAILL). Topologically, residues 91–97 (HYLTDNK) are extracellular. The chain crosses the membrane as a helical span at residues 98–118 (GWIFLLSLVGITPLAERLGYA). Over 119–129 (TEQLACYTGST) the chain is Cytoplasmic. The chain crosses the membrane as a helical span at residues 130–150 (VGGLLNATFGNVTELIISIFA). A cation selection region spans residues 139 to 174 (GNVTELIISIFALKSGMIRVVQLTLLGSILSNMLLV). Residues 151–165 (LKSGMIRVVQLTLLG) are Extracellular-facing. Residues 166-186 (SILSNMLLVLGCAFFCGGLVF) traverse the membrane as a helical segment. Residues 187-197 (SQKEQVFDKGN) are Cytoplasmic-facing. The helical transmembrane segment at 198 to 218 (AVVNSGLLLMAVMGLLFPAVL) threads the bilayer. Topologically, residues 219–231 (HYTHSEVHAGSSE) are extracellular. A helical membrane pass occupies residues 232 to 252 (LALSRFSSCIMLVAYAAYLFF). Residues 253 to 286 (QLKSQPSSYTPLTEETNQNEETSDDDEDPEISKW) lie on the Cytoplasmic side of the membrane. The chain crosses the membrane as a helical span at residues 287–307 (EAIIWLSILTAWVSLLSGYLV). Topologically, residues 308-311 (DAIE) are extracellular. The chain crosses the membrane as a helical span at residues 312 to 332 (GASVSWKIPISFISVILLPIV). The Cytoplasmic portion of the chain corresponds to 333–354 (GNAAEHAGAIMFAMKDKLDLSL). The interval 333-368 (GNAAEHAGAIMFAMKDKLDLSLGVAIGSSIQISMFA) is cation selection. A helical membrane pass occupies residues 355–375 (GVAIGSSIQISMFAVPFCVVI). The Extracellular segment spans residues 376 to 384 (GWMMGAQMD). The helical transmembrane segment at 385–405 (LNFQLFETATLFITVIVVAFF) threads the bilayer. Residues 406-412 (LQEGTSN) lie on the Cytoplasmic side of the membrane. The helical transmembrane segment at 413–433 (YFKGLMLILCYLIVAASFFVH) threads the bilayer. At 434–441 (EDPHQDDI) the chain is on the extracellular side.

It belongs to the Ca(2+):cation antiporter (CaCA) (TC 2.A.19) family. Cation/proton exchanger (CAX) subfamily.

Its subcellular location is the vacuole membrane. Its function is as follows. Vacuolar cation/proton exchanger (CAX). Translocates Ca(2+) and other metal ions into vacuoles using the proton gradient formed by H(+)-ATPase and H(+)-pyrophosphatase. This chain is Vacuolar cation/proton exchanger 5 (CAX5), found in Arabidopsis thaliana (Mouse-ear cress).